The chain runs to 193 residues: Rho-related GTP-binding protein RhoA-C (193 aa).

GTP contacts are provided by residues 12–19 (GDGACGKT), 30–37 (FPEVYVPT), 59–63 (DTAGQ), 117–120 (NKKD), and 160–162 (SAK). Residue Tyr34 is glycosylated ((Microbial infection) O-linked (GlcNAc) tyrosine; by Yersinia Afp18). Cys190 bears the Cysteine methyl ester mark. Residue Cys190 is the site of S-geranylgeranyl cysteine attachment. Positions 191 to 193 (LLL) are cleaved as a propeptide — removed in mature form.

This sequence belongs to the small GTPase superfamily. Rho family. Post-translationally, (Microbial infection) Glycosylated at Tyr-34 by Yersinia ruckeri toxin Afp18. Mono-O-GlcNAcylation by Afp18 inhibits RhoA activation by guanine nucleotide exchange factors and blocks RhoA signaling.

The protein resides in the cell membrane. In terms of biological role, regulates a signal transduction pathway linking plasma membrane receptors to the assembly of focal adhesions and actin stress fibers. The polypeptide is Rho-related GTP-binding protein RhoA-C (Danio rerio (Zebrafish)).